The primary structure comprises 385 residues: tRNA-specific 2-thiouridylase MnmA (385 aa).

Residues 30-37 (GMSGGVDS) and Met56 contribute to the ATP site. Residues 118–120 (NPD) are interaction with target base in tRNA. Catalysis depends on Cys123, which acts as the Nucleophile. Cys123 and Cys220 are joined by a disulfide. Gly148 provides a ligand contact to ATP. The segment at 170-172 (KDQ) is interaction with tRNA. The active-site Cysteine persulfide intermediate is Cys220. The interval 332–333 (RY) is interaction with tRNA.

This sequence belongs to the MnmA/TRMU family.

The protein localises to the cytoplasm. It carries out the reaction S-sulfanyl-L-cysteinyl-[protein] + uridine(34) in tRNA + AH2 + ATP = 2-thiouridine(34) in tRNA + L-cysteinyl-[protein] + A + AMP + diphosphate + H(+). In terms of biological role, catalyzes the 2-thiolation of uridine at the wobble position (U34) of tRNA, leading to the formation of s(2)U34. The protein is tRNA-specific 2-thiouridylase MnmA of Haemophilus influenzae (strain PittGG).